The chain runs to 231 residues: Large ribosomal subunit protein uL1 (231 aa).

This sequence belongs to the universal ribosomal protein uL1 family. As to quaternary structure, part of the 50S ribosomal subunit.

Functionally, binds directly to 23S rRNA. The L1 stalk is quite mobile in the ribosome, and is involved in E site tRNA release. Its function is as follows. Protein L1 is also a translational repressor protein, it controls the translation of the L11 operon by binding to its mRNA. In Azoarcus sp. (strain BH72), this protein is Large ribosomal subunit protein uL1.